The primary structure comprises 411 residues: Immunity-related GTPase family M protein (411 aa).

The tract at residues 1 to 21 (MKPSHKSCEAAPLLPKMPETS) is disordered. The 177-residue stretch at 77 to 253 (IPVSIFVTGD…PELRNTLQTD (177 aa)) folds into the IRG-type G domain. GTP contacts are provided by residues 86–93 (DSGNGMSS), 111–115 (TGVVR), and 193–195 (KLD). Residue Ser204 is modified to Phosphoserine. 234 to 236 (SNL) is a binding site for GTP. Lys272 participates in a covalent cross-link: Glycyl lysine isopeptide (Lys-Gly) (interchain with G-Cter in ubiquitin). The tract at residues 352-376 (KLRLMTCTTVNALFCLFKFLPCLCH) is alpha-K amphipathic helix.

It belongs to the TRAFAC class dynamin-like GTPase superfamily. IRG family. Interacts with ULK1; promoting the coassembly of ULK1 and BECN1. Interacts with BECN1; enhancing BECN1-interacting partners and influencing the composition of the BECN1 complex. Interacts with ATG16L1. Interacts with NOD2; promoting Irgm 'Lys-63'-linked polyubiquitination, which is required for interactions with the core autophagy factors. Interacts with STX17; promoting STX17 recruitment to autophagosomes. Interacts with ATG8 proteins (GABARAP, GABARAPL1, GABARAPL2, MAP1LC3A, MAP1LC3B and MAP1LC3C); promoting STX17 recruitment to autophagosomes. Interacts with TFEB; promoting association between TFEB and PPP3CB and TFEB dephosphorylation. Interacts with PPP3CB; promoting association between TFEB and PPP3CB and TFEB dephosphorylation. Interacts with NLRP3; preventing NLRP3 inflammasome assembly and promoting SQSTM1/p62-dependent autophagic degradation of NLRP3. Interacts with CGAS; promoting SQSTM1/p62-dependent autophagic degradation of CGAS. Interacts with RIGI/RIG-I; promoting SQSTM1/p62-dependent autophagic degradation of RIGI/RIG-I. Interacts with NOD1; promoting SQSTM1/p62-dependent autophagic degradation of RIGI/RIG-I. Interacts with NOD2; promoting SQSTM1/p62-dependent autophagic degradation of RIGI/RIG-I. Interacts with RIPK2; promoting SQSTM1/p62-dependent autophagic degradation of RIGI/RIG-I. Interacts with PIK3CA. Palmitoylated on C-terminal Cys residues. Palmitoylation, together with the alpha-K amphipathic helix, which binds phosphatidylinositol, mediate binding to membranes. Post-translationally, ubiquitinated via 'Lys-63'-linked polyubiquitination in a NOD2-dependent process. 'Lys-63'-linked polyubiquitination is required for interactions with the core autophagy factors. Ubiquitination at Lys-272 by the DCX(WDR77) complex, also named CLR4(WDR77) complex, in intestinal cells, leading to its degradation by the proteasome.

It is found in the golgi apparatus membrane. The protein localises to the cell membrane. Its subcellular location is the cytoplasmic vesicle. It localises to the phagosome membrane. The protein resides in the autophagosome membrane. It is found in the lysosome membrane. The protein localises to the late endosome membrane. Its subcellular location is the mitochondrion membrane. It localises to the cell projection. The protein resides in the phagocytic cup. It catalyses the reaction GTP + H2O = GDP + phosphate + H(+). Its function is as follows. Immunity-related GTPase that plays important roles in innate immunity and inflammatory response. Acts as a dynamin-like protein that binds to intracellular membranes and promotes remodeling and trafficking of those membranes. Required for clearance of acute protozoan and bacterial infections by interacting with autophagy and lysosome regulatory proteins, thereby promoting the fusion of phagosomes with lysosomes for efficient degradation of cargo including microbes. Regulates selective autophagy, including xenophagy and mitophagy, both directly and indirectly. Directly regulates autophagy by acting as a molecular adapter that promotes the coassembly of the core autophagy machinery to mediate antimicrobial defense: Irgm (1) activates AMPK, which in turn phosphorylates ULK1 and BECN1 to induce autophagy, (2) promotes the coassembly of ULK1 and BECN1, enhancing BECN1-interacting partners and (3) influences the composition of the BECN1 complex, by competing with the negative regulators BCL2 and RUBCN, to trigger autophagy. Also activates autophagy by promoting recruitment of STX17 to autophagosomes. In collaboration with ATG8 proteins, regulate lysosomal biogenesis, a fundamental process for any autophagic pathway, by promoting TFEB dephosphorylation. Also modulates autophagy by assisting with autophagosome formation and preventing lysosomal deacidification. Regulates autophagy by affecting mitochondrial fusion and fission. Also involved in M1 macrophage activation for the production of proinflammatory cytokines. While activating autophagy, acts as a key negative regulator of the inflammatory and interferon responses both by (1) promoting mitophagy and (2) mediating autophagy-dependent degradation of effectors of the inflammatory response. Promotes degradation of damaged and IFNG/IFN-gamma-stressed mitochondria via mitophagy, preventing cytosolic release of ligands that activate inflammation. Negatively regulates interferon-signaling in hematopoietic stem cells, preserving hematopoietic stem cell number and function. Promotes expansion of activated CD4(+) T-cells by inhibiting IFNG/IFN-gamma signaling, thereby preventing Ifng-mediated cell death of CD4(+) T-cells. Acts as a suppressor of inflammation by promoting recruitment of inflammation effectors, such as CGAS, RIGI/RIG-I and NLRP3, to autophagosome membranes, leading to their SQSTM1/p62-dependent autophagic degradation. Also directly inhibits assembly of the NLRP3 inflammasome by preventing the association between NLRP3 and PYCARD. Acts as a negative regulator of antiviral innate immune response by suppressing the RIPK2-dependent pro-inflammatory response: mediates recruitment of RIPosomes, composed of RIPK2 and NOD1 or NOD2, to autophagosome membranes, promoting their SQSTM1/p62-dependent autophagic degradation. The polypeptide is Immunity-related GTPase family M protein (Rattus norvegicus (Rat)).